The following is a 228-amino-acid chain: Urease accessory protein UreF (228 aa).

Belongs to the UreF family. As to quaternary structure, ureD, UreF and UreG form a complex that acts as a GTP-hydrolysis-dependent molecular chaperone, activating the urease apoprotein by helping to assemble the nickel containing metallocenter of UreC. The UreE protein probably delivers the nickel.

The protein resides in the cytoplasm. Functionally, required for maturation of urease via the functional incorporation of the urease nickel metallocenter. The chain is Urease accessory protein UreF from Yersinia enterocolitica serotype O:8 / biotype 1B (strain NCTC 13174 / 8081).